We begin with the raw amino-acid sequence, 425 residues long: MESLKRWNEERGLWCEKGVQVLLTTVGAFAAFGLMTIAISTDYWLYTRALICNTTNLTAGGDDGTPHRGGGGASEKKDPGGLTHSGLWRICCLEGLKRGVCVKINHFPEDTDYDHDSAEYLLRVVRASSIFPILSAILLLLGGVCVAASRVYKSKRNIILGAGILFVAAGLSNIIGVIVYISANAGEPGPKRDEEKKNHYSYGWSFYFGGLSFILAEVIGVLAVNIYIERSREAHCQSRSDLLKAGGGAGGSGGSGPSAILRLPSYRFRYRRRSRSSSRSSEPSPSRDASPGGPGGPGFASTDISMYTLSRDPSKGSVAAGLAGAGGGGGGAVGAFGGAAGGAGGGGGGGGGAGAERDRGGASGFLTLHNAFPKEAGGGVTVTVTGPPAPPAPAPPAPSAPAPGTLAKEAAASNTNTLNRKTTPV.

4 helical membrane-spanning segments follow: residues 19–39 (VQVLLTTVGAFAAFGLMTIAI), 129–149 (SIFPILSAILLLLGGVCVAAS), 158–178 (IILGAGILFVAAGLSNIIGVI), and 208–228 (FGGLSFILAEVIGVLAVNIYI). Phosphoserine occurs at positions 252 and 255. The disordered stretch occupies residues 272–304 (RRSRSSSRSSEPSPSRDASPGGPGGPGFASTDI). Over residues 277–287 (SSRSSEPSPSR) the composition is skewed to low complexity. The helical transmembrane segment at 318 to 338 (VAAGLAGAGGGGGGAVGAFGG) threads the bilayer. The span at 343-354 (AGGGGGGGGGAG) shows a compositional bias: gly residues. 2 disordered regions span residues 343 to 365 (AGGGGGGGGGAGAERDRGGASGF) and 377 to 425 (GGGV…TTPV). The segment covering 387-401 (PPAPPAPAPPAPSAP) has biased composition (pro residues). Residues 412-425 (ASNTNTLNRKTTPV) show a composition bias toward polar residues.

It belongs to the PMP-22/EMP/MP20 family. CACNG subfamily. As to quaternary structure, interacts with CACNA1C. Identified in a complex with the L-type calcium channel subunits CACNA1C, CACNA2D1 and either CACNB1 or CACNB2. Acts as an auxiliary subunit for AMPA-selective glutamate receptors (AMPARs). Found in a complex with GRIA1, GRIA2, GRIA3, GRIA4, CNIH2, CNIH3, CACNG2, CACNG3, CACNG4, CACNG5 and CACNG7. Interacts with CNIH2. Found in a complex with GRIA1, GRIA2, GRIA3, GRIA4, DLG4 and CNIH2. Post-translationally, palmitoylated. Probably palmitoylated by ZDHHC3 and ZDHHC7. As to expression, detected in heart left ventricle.

It localises to the cell membrane. The protein resides in the postsynaptic density membrane. Functionally, regulates the activity of L-type calcium channels that contain CACNA1C as pore-forming subunit. Regulates the trafficking and gating properties of AMPA-selective glutamate receptors (AMPARs). Promotes their targeting to the cell membrane and synapses and modulates their gating properties by slowing their rates of activation, deactivation and desensitization and by mediating their resensitization. Does not show subunit-specific AMPA receptor regulation and regulates all AMPAR subunits. The chain is Voltage-dependent calcium channel gamma-8 subunit from Homo sapiens (Human).